The sequence spans 178 residues: Dual-action ribosomal maturation protein DarP (178 aa).

Belongs to the DarP family.

The protein localises to the cytoplasm. In terms of biological role, member of a network of 50S ribosomal subunit biogenesis factors which assembles along the 30S-50S interface, preventing incorrect 23S rRNA structures from forming. Promotes peptidyl transferase center (PTC) maturation. This is Dual-action ribosomal maturation protein DarP from Haemophilus influenzae (strain 86-028NP).